A 62-amino-acid chain; its full sequence is Large ribosomal subunit protein bL28 (62 aa).

Positions 1–22 are disordered; sequence MGKQCFVTGRKASTGNRRSHAL.

This sequence belongs to the bacterial ribosomal protein bL28 family.

This is Large ribosomal subunit protein bL28 from Staphylococcus aureus (strain N315).